The following is a 295-amino-acid chain: Ribosomal RNA small subunit methyltransferase A (295 aa).

The S-adenosyl-L-methionine site is built by N28, L30, G55, E76, D101, and N131.

It belongs to the class I-like SAM-binding methyltransferase superfamily. rRNA adenine N(6)-methyltransferase family. RsmA subfamily.

The protein localises to the cytoplasm. The enzyme catalyses adenosine(1518)/adenosine(1519) in 16S rRNA + 4 S-adenosyl-L-methionine = N(6)-dimethyladenosine(1518)/N(6)-dimethyladenosine(1519) in 16S rRNA + 4 S-adenosyl-L-homocysteine + 4 H(+). Functionally, specifically dimethylates two adjacent adenosines (A1518 and A1519) in the loop of a conserved hairpin near the 3'-end of 16S rRNA in the 30S particle. May play a critical role in biogenesis of 30S subunits. This chain is Ribosomal RNA small subunit methyltransferase A, found in Pelotomaculum thermopropionicum (strain DSM 13744 / JCM 10971 / SI).